The following is a 349-amino-acid chain: Phenylalanine--tRNA ligase alpha subunit (349 aa).

Glu264 is a binding site for Mg(2+).

Belongs to the class-II aminoacyl-tRNA synthetase family. Phe-tRNA synthetase alpha subunit type 1 subfamily. Tetramer of two alpha and two beta subunits. Mg(2+) is required as a cofactor.

It is found in the cytoplasm. It carries out the reaction tRNA(Phe) + L-phenylalanine + ATP = L-phenylalanyl-tRNA(Phe) + AMP + diphosphate + H(+). The chain is Phenylalanine--tRNA ligase alpha subunit from Myxococcus xanthus (strain DK1622).